A 165-amino-acid chain; its full sequence is MADFDEIYEEEEDEERALEEQLLKYSPDPVVVRGSGHVTVFGLSNKFESEFPSSLTGKVAPEEFKASINRVNSCLKKNLPVNVRWLLCGCLCCCCTLGCSMWPVICLSKRTRRSIEKLLEWENNRLYHKLCLHWRLSKRKCETNNMMEYVILIEFLPKTPIFRPD.

A coiled-coil region spans residues 1–26; it reads MADFDEIYEEEEDEERALEEQLLKYS. Positions 88–106 match the CHIC motif (Cys-rich) motif; that stretch reads CGCLCCCCTLGCSMWPVIC.

The protein belongs to the CHIC family. In terms of processing, palmitoylation in the CHIC motif is required for membrane association.

The protein resides in the cell membrane. It is found in the cytoplasmic vesicle. The polypeptide is Cysteine-rich hydrophobic domain-containing protein 2 (CHIC2) (Homo sapiens (Human)).